A 274-amino-acid chain; its full sequence is MKKTAIALLAWFVSSASLAATPWQKITHPVPGAAQSIGSFANGCIIGADTLPVQSDNYQVMRTDQRRYFGHPDLVMFIQRLSHQAQQRGLGTVLIGDMGMPAGGRFNGGHASHQTGLDVDIFLQLPKTRWSQAQLLRPQALDLVSRDGKHVVPSRWSSDIASLIKLAAQDNDVTRIFVNPAIKQQLCLDAGNDRDWLRKVRPWFQHRAHMHVRLRCPADSLECEDQPLPPPGDGCGAELQSWFEPPKPGTTKPEKKTPPPLPPSCQALLDEHVL.

Residues Met-1–Ala-19 form the signal peptide. Disulfide bonds link Cys-44–Cys-265, Cys-187–Cys-235, and Cys-216–Cys-223. Zn(2+) contacts are provided by His-110, His-113, Asp-120, Asp-147, His-150, and His-211. The interval Asp-225–Leu-274 is disordered.

It belongs to the peptidase M74 family. In terms of assembly, dimer. The cofactor is Zn(2+).

It is found in the periplasm. In terms of biological role, murein endopeptidase that cleaves the D-alanyl-meso-2,6-diamino-pimelyl amide bond that connects peptidoglycan strands. Likely plays a role in the removal of murein from the sacculus. This chain is Penicillin-insensitive murein endopeptidase, found in Salmonella agona (strain SL483).